Reading from the N-terminus, the 499-residue chain is WD repeat-containing protein 55 homolog (499 aa).

Positions 1-130 (MHTHNNFKTP…EATFDLDVDD (130 aa)) are disordered. Composition is skewed to acidic residues over residues 12 to 23 (DEDELDDLDEDM) and 31 to 48 (IEQE…EYDL). A compositionally biased stretch (low complexity) spans 91 to 103 (DDAGGASAGGATS). Over residues 113–122 (PSGSNRQSEA) the composition is skewed to polar residues. WD repeat units follow at residues 154-193 (KLED…NKLL), 198-237 (VHSK…LKKL), 241-279 (AHDD…AIFE), 282-321 (ELED…MYVQ), 324-363 (PYEE…YHCD), and 408-447 (QHNM…DFGD). The interval 480–499 (TKEDADDDDHDPSAGPSNMA) is disordered.

It belongs to the WD repeat WDR55 family.

This chain is WD repeat-containing protein 55 homolog, found in Drosophila yakuba (Fruit fly).